The chain runs to 301 residues: Cytidine deaminase 1 (301 aa).

2 CMP/dCMP-type deaminase domains span residues 23–156 and 188–301; these read SVIQ…FGPD and DSSA…CYEA. 64 to 66 is a substrate binding site; sequence NVE. Residue H77 participates in Zn(2+) binding. E79 (proton donor) is an active-site residue. The Zn(2+) site is built by C104 and C107.

The protein belongs to the cytidine and deoxycytidylate deaminase family. As to quaternary structure, homodimer. The cofactor is Zn(2+). Expressed in roots, rosette leaves, stems and flowers.

The enzyme catalyses cytidine + H2O + H(+) = uridine + NH4(+). The catalysed reaction is 2'-deoxycytidine + H2O + H(+) = 2'-deoxyuridine + NH4(+). Inhibited by uridine, CMP and dCMP. In terms of biological role, this enzyme scavenges exogenous and endogenous cytidine and 2'-deoxycytidine for UMP synthesis. Functions as a conventional cytidine deaminase. Has no affinity for RNA and is not involved in RNA-editing by C-to-U deamination. This is Cytidine deaminase 1 (CDA1) from Arabidopsis thaliana (Mouse-ear cress).